The primary structure comprises 918 residues: Interleukin-6 receptor subunit beta (918 aa).

Residues 1–22 (MSALRIWLMQALLIFLTTESIG) form the signal peptide. Residues 23–618 (QLVEPCGYIY…TLKFAQGEIE (596 aa)) lie on the Extracellular side of the membrane. Residues 26–120 (EPCGYIYPEF…IEQNVYGITI (95 aa)) form the Ig-like C2-type domain. 2 cysteine pairs are disulfide-bonded: C28-C54 and C48-C103. 4 N-linked (GlcNAc...) asparagine glycosylation sites follow: N43, N61, N83, and N131. 5 consecutive Fibronectin type-III domains span residues 125-215 (PPDI…NFDP), 223-323 (PPHN…TYED), 328-418 (APSF…IPGS), 422-516 (ASHP…LKQA), and 518-612 (PSKG…TLKF). A disulfide bridge connects residues C134 and C144. N157 is a glycosylation site (N-linked (GlcNAc...) asparagine). A disulfide bond links C172 and C181. N-linked (GlcNAc...) asparagine glycosylation is found at N205 and N226. A WSXWS motif motif is present at residues 309-313 (WSDWS). Residues N382 and N389 are each glycosylated (N-linked (GlcNAc...) asparagine). A disulfide bridge connects residues C457 and C465. N477 and N552 each carry an N-linked (GlcNAc...) asparagine glycan. A helical membrane pass occupies residues 619–640 (AIVVPVCLAFLLTTLLGVLFCF). Residues 641 to 918 (NKRDLIKKHI…TVRQGGYMPQ (278 aa)) are Cytoplasmic-facing. A Box 1 motif motif is present at residues 650-658 (IWPNVPDPS). 4 disordered regions span residues 659-679 (KSHI…NSKD), 720-754 (TEGH…STAS), 773-795 (VQVF…PEDL), and 817-842 (SCSQ…GSEE). Residues S660 and S666 each carry the phosphoserine modification. Over residues 730 to 751 (SSCMSSSRPSISSSEENESAQS) the composition is skewed to low complexity. Residues 773-785 (VQVFSRSESTQPL) are compositionally biased toward polar residues. Residues S781, S788, S828, and S838 each carry the phosphoserine modification.

This sequence belongs to the type I cytokine receptor family. Type 2 subfamily. Component of a hexamer of two molecules each of IL6, IL6R and IL6ST; associates with the complex IL6:IL6R but does not interact with IL6. Forms heterodimers composed of LIFR and IL6ST (type I OSM receptor) which are activated by LIF and OSM. Also forms heterodimers composed of OSMR and IL6ST (type II receptor) which are activated by OSM but not by LIF. Interacts with HCK. Interacts with INPP5D/SHIP1. Interacts with SRC and YES. Interacts with ARMH4; this interaction prevents IL6ST protein homodimerization and bridges ARMH4 with IL6R and STAT3 and therefore inhibits phosphorylation of STAT3 at 'Tyr-705'. In terms of processing, phosphorylation of Ser-781 down-regulates cell surface expression. Heavily N-glycosylated. Glycosylation is required for protein stability and localization in plasma membrane but not for ligand binding. Found in hepatocytes, astrocytes, fibroblasts and endothelial cells.

The protein localises to the cell membrane. In terms of biological role, signal-transducing molecule. The receptor systems for IL6, LIF, OSM, CNTF, IL11, CTF1 and BSF3 can utilize IL6ST for initiating signal transmission. Binding of IL6 to IL6R induces IL6ST homodimerization and formation of a high-affinity receptor complex, which activates the intracellular JAK-MAPK and JAK-STAT3 signaling pathways. That causes phosphorylation of IL6ST tyrosine residues which in turn activates STAT3. In parallel, the IL6 signaling pathway induces the expression of two cytokine receptor signaling inhibitors, SOCS1 and SOCS3, which inhibit JAK and terminate the activity of the IL6 signaling pathway as a negative feedback loop. Also activates the yes-associated protein 1 (YAP) and NOTCH pathways to control inflammation-induced epithelial regeneration, independently of STAT3. Mediates signals which regulate immune response, hematopoiesis, pain control and bone metabolism. Has a role in embryonic development. Essential for survival of motor and sensory neurons and for differentiation of astrocytes. Required for expression of TRPA1 in nociceptive neurons. Required for the maintenance of PTH1R expression in the osteoblast lineage and for the stimulation of PTH-induced osteoblast differentiation. Required for normal trabecular bone mass and cortical bone composition. This is Interleukin-6 receptor subunit beta from Rattus norvegicus (Rat).